A 243-amino-acid polypeptide reads, in one-letter code: tRNA (guanine-N(1)-)-methyltransferase (243 aa).

S-adenosyl-L-methionine-binding positions include G108 and 127-132 (LGDFVL).

This sequence belongs to the RNA methyltransferase TrmD family. In terms of assembly, homodimer.

Its subcellular location is the cytoplasm. The catalysed reaction is guanosine(37) in tRNA + S-adenosyl-L-methionine = N(1)-methylguanosine(37) in tRNA + S-adenosyl-L-homocysteine + H(+). Functionally, specifically methylates guanosine-37 in various tRNAs. The sequence is that of tRNA (guanine-N(1)-)-methyltransferase from Streptococcus equi subsp. zooepidemicus (strain MGCS10565).